A 956-amino-acid polypeptide reads, in one-letter code: Plasma membrane ATPase 3 (956 aa).

The Cytoplasmic portion of the chain corresponds to 1 to 65 (MGEKPEVLDA…EKKESKFSKF (65 aa)). The chain crosses the membrane as a helical span at residues 66–85 (LGFMWNPLSWVMEAAAIMAI). The Extracellular portion of the chain corresponds to 86–97 (ALANGGGKPPDW). A helical transmembrane segment spans residues 98–118 (QDFVGIITLLIINSTISFIEE). Over 119 to 247 (NNAGNAAAAL…GHFQKVLTAI (129 aa)) the chain is Cytoplasmic. Residues 248-268 (GNFCICSIAVGMIIEIIVMYP) form a helical membrane-spanning segment. Residues 269 to 278 (IQHRKYRPGI) lie on the Extracellular side of the membrane. The helical transmembrane segment at 279–300 (DNLLVLLIGGIPIAMPTVLSVT) threads the bilayer. Residues 301–647 (MAIGSHRLAQ…TSRAIFQRMK (347 aa)) lie on the Cytoplasmic side of the membrane. The active-site 4-aspartylphosphate intermediate is aspartate 333. 2 residues coordinate Mg(2+): aspartate 592 and aspartate 596. A helical membrane pass occupies residues 648-669 (NYTIYAVSITIRIVLGFMLLAL). The Extracellular portion of the chain corresponds to 670 to 674 (IWQFD). The chain crosses the membrane as a helical span at residues 675–697 (FPPFMVLIIAILNDGTIMTISKD). Over 698–713 (RVKPSPLPDSWKLAEI) the chain is Cytoplasmic. Residues 714-734 (FTTGVVLGGYLAMMTVIFFWA) form a helical membrane-spanning segment. Residues 735–759 (AYKTNFFPRVFGVSTLEKTATDDFR) are Extracellular-facing. Residues 760-780 (KLASAIYLQVSTISQALIFVT) form a helical membrane-spanning segment. The Cytoplasmic segment spans residues 781–792 (RSRSWSFMERPG). A helical membrane pass occupies residues 793–813 (LLLVVAFFIAQLVATLIAVYA). At 814-822 (NWSFAAIEG) the chain is on the extracellular side. Residues 823–843 (IGWGWAGVIWLYNIVFYIPLD) form a helical membrane-spanning segment. The Cytoplasmic segment spans residues 844-956 (LXXFLIRYAL…IETIQQAYTV (113 aa)).

It belongs to the cation transport ATPase (P-type) (TC 3.A.3) family. Type IIIA subfamily. As to expression, expressed in roots, stems, leaves from both vegetative and flowering plants, and flowers at early and late stages of development with highest expression levels found in flowers and root tissue.

It localises to the cell membrane. It carries out the reaction ATP + H2O + H(+)(in) = ADP + phosphate + 2 H(+)(out). Its function is as follows. The plasma membrane ATPase of plants and fungi is a hydrogen ion pump. The proton gradient it generates drives the active transport of nutrients by H(+)-symport. The resulting external acidification and/or internal alkinization may mediate growth responses. The polypeptide is Plasma membrane ATPase 3 (PMA3) (Nicotiana plumbaginifolia (Leadwort-leaved tobacco)).